The following is a 417-amino-acid chain: Transmembrane protease serine 11D (417 aa).

Over 1–17 (MYRPRSMVSPSRFFNPF) the chain is Cytoplasmic. Residues 18–38 (MVALIVIITVGLLAMTAGLLI) traverse the membrane as a helical; Signal-anchor for type II membrane protein segment. Over 39 to 417 (HFLAFDKRAY…RNWIRQQTGI (379 aa)) the chain is Extracellular. The SEA domain occupies 46–162 (RAYFYHSNFH…SNGITSLTDQ (117 aa)). 4 cysteine pairs are disulfide-bonded: Cys-172–Cys-291, Cys-211–Cys-227, Cys-336–Cys-352, and Cys-363–Cys-392. The 231-residue stretch at 186 to 416 (IIGGTQAETG…YRNWIRQQTG (231 aa)) folds into the Peptidase S1 domain. Active-site charge relay system residues include His-226 and Asp-271. Ser-367 acts as the Charge relay system in catalysis.

It belongs to the peptidase S1 family. In terms of assembly, monomer. As to expression, isoform 1 and isoform 2 are expressed in the esophagus, tongue and trachea. Isoform 2 is also highly expressed in the adrenal cortex and heart.

It localises to the cell membrane. The protein resides in the secreted. In terms of biological role, may play some biological role in the host defense system on the mucous membrane independently of or in cooperation with other substances in airway mucous or bronchial secretions. Plays a role in the proteolytic processing of ACE2. Preferentially cleaves the C-terminal side of arginine residues at the P1 position of certain peptides. Isoform 2 may play a key role in regulating adrenal proliferation by specifically cleaving N-POMC. The sequence is that of Transmembrane protease serine 11D (Tmprss11d) from Rattus norvegicus (Rat).